We begin with the raw amino-acid sequence, 485 residues long: Podocalyxin (485 aa).

The first 24 residues, 1–24 (MRPTLALSALLLLQLLLLSTPSLS), serve as a signal peptide directing secretion. The tract at residues 22–267 (SLSQDNGNKT…STPSSTWTSG (246 aa)) is disordered. Over 25–386 (QDNGNKTDTS…PPEVNEDRFS (362 aa)) the chain is Extracellular. Residues 26–57 (DNGNKTDTSDITSIDQNQDKPATNQPSNATPK) show a composition bias toward polar residues. N-linked (GlcNAc...) asparagine glycosylation is found at N29 and N82. Residues 58 to 109 (SSVQPPTPTSISTSSPDPKATQSSNSSVTTTSDSTTDRTSSSTSTVPTTSNS) are compositionally biased toward low complexity. Polar residues-rich tracts occupy residues 110 to 128 (GQTV…TALP) and 135 to 149 (NASS…STKL). N-linked (GlcNAc...) asparagine glycosylation is found at N135, N144, and N156. Low complexity predominate over residues 150-161 (PSTPTTNSTASP). Composition is skewed to polar residues over residues 163 to 176 (QPVS…TTVQ), 186 to 228 (DNTT…QPTG), and 235 to 253 (SVPT…TPVV). The N-linked (GlcNAc...) asparagine glycan is linked to N187. Residues 254–267 (SQGPSTPSSTWTSG) show a composition bias toward low complexity. N-linked (GlcNAc...) asparagine glycosylation occurs at N287. Residues 387–407 (LPLIITIVCMASFLLLVAALY) form a helical membrane-spanning segment. Topologically, residues 408-485 (GCCHQRISQR…DLDEEEDTHL (78 aa)) are cytoplasmic. A Phosphothreonine modification is found at T445. S464 carries the phosphoserine modification. Phosphothreonine is present on T483.

The protein belongs to the podocalyxin family. Monomer; when associated with the membrane raft. Oligomer; when integrated in the apical membrane. Interacts with NHERF2. Interacts (via the C-terminal PDZ-binding motif DTHL) with NHERF1 (via the PDZ domains); the interaction take place early in the secretory pathway and is necessary for its apical membrane sorting. Found in a complex with EZR, PODXL and NHERF2. Associates with the actin cytoskeleton through complex formation with EZR and NHERF2. Interacts (via the C-terminal PDZ-binding motif DTHL) with NHERF1 (via the PDZ domains); interaction is not detected in glomerular epithelium cells. Interacts (via the C-terminal PDZ-binding motif DTHL) with NHERF2 (via the PDZ 1 domain); interaction is detected in glomerular epithelium cells. Interacts with EZR. N- and O-linked glycosylated. Sialoglycoprotein. As to expression, glomerular epithelium cell (podocyte) (at protein level).

It is found in the apical cell membrane. The protein localises to the cell projection. Its subcellular location is the microvillus. It localises to the membrane raft. The protein resides in the lamellipodium. It is found in the filopodium. The protein localises to the ruffle. Its subcellular location is the membrane. In terms of biological role, involved in the regulation of both adhesion and cell morphology and cancer progression. Functions as an anti-adhesive molecule that maintains an open filtration pathway between neighboring foot processes in the podocyte by charge repulsion. Acts as a pro-adhesive molecule, enhancing the adherence of cells to immobilized ligands, increasing the rate of migration and cell-cell contacts in an integrin-dependent manner. Induces the formation of apical actin-dependent microvilli. Involved in the formation of a preapical plasma membrane subdomain to set up initial epithelial polarization and the apical lumen formation during renal tubulogenesis. Plays a role in cancer development and aggressiveness by inducing cell migration and invasion through its interaction with the actin-binding protein EZR. Affects EZR-dependent signaling events, leading to increased activities of the MAPK and PI3K pathways in cancer cells. The protein is Podocalyxin (Podxl) of Rattus norvegicus (Rat).